We begin with the raw amino-acid sequence, 176 residues long: Transmembrane protein 238 (176 aa).

Residues Met-1–Ala-22 form a disordered region. Topologically, residues Met-1–Met-36 are cytoplasmic. The segment covering Ala-9–Ala-22 has biased composition (low complexity). A helical membrane pass occupies residues Ala-37 to Phe-57. Residues Ala-58–Asp-69 lie on the Extracellular side of the membrane. A helical transmembrane segment spans residues Leu-70–Tyr-90. The Cytoplasmic segment spans residues Thr-91–Glu-176. Over residues Ser-124–Ser-137 the composition is skewed to low complexity. Residues Ser-124–Val-157 form a disordered region. The residue at position 175 (Ser-175) is a Phosphoserine.

It localises to the membrane. This Homo sapiens (Human) protein is Transmembrane protein 238 (TMEM238).